The following is a 471-amino-acid chain: MNPNQKIICISATGMTLSVVSLLVGIANLGLNIGLHYKVGYTPDVNTPNVNGTNSTTTTIINNNTQNNFTNITNIIQNKNEERTFLNLTKPLCEVNSWHILSKDNAIRIGEDANILVTREPYLSCDPQGCRMFALSQGTTLKGRHANGTIHDRSPFRALVSWEMGQAPSPYNAKIECIGWSSTSCHDGISRMSICMSGPNNNASAVVWYGGRPVTEIPSWAGNILRTQESECVCHKGICPVVMTDGPANNKAATKIIYFKEGKIQKIEELTGTAQHIEECSCYGAKEVIKCICRDNWKGANRPVITIDPDMMTHTSKYLCSKILTDTSRPNDPNNGNCDAPITGGGPDPGVKGFAFLDGENSWLGRTISKDSRSGYEVLKVPNAETNTQSGPITHQIIVNNQNWSGYSGAFIDYWANKECFNPCFYVELIRGRPKESSVLWTSNSIVALCGSRERLGSWSWHDGAEITYFK.

Residues methionine 1–lysine 6 lie on the Intravirion side of the membrane. The helical transmembrane segment at isoleucine 7–alanine 27 threads the bilayer. The segment at serine 11–isoleucine 33 is involved in apical transport and lipid raft association. The Virion surface portion of the chain corresponds to asparagine 28 to lysine 471. The interval histidine 36–threonine 89 is hypervariable stalk region. Asparagine 51, asparagine 54, asparagine 63, asparagine 68, asparagine 71, and asparagine 87 each carry an N-linked (GlcNAc...) asparagine; by host glycan. The head of neuraminidase stretch occupies residues leucine 92–lysine 471. Cystine bridges form between cysteine 93/cysteine 420, cysteine 125/cysteine 130, cysteine 185/cysteine 232, cysteine 234/cysteine 239, cysteine 280/cysteine 293, cysteine 282/cysteine 291, cysteine 320/cysteine 338, and cysteine 424/cysteine 450. Position 119 (arginine 119) interacts with substrate. A glycan (N-linked (GlcNAc...) asparagine; by host) is linked at asparagine 147. The active-site Proton donor/acceptor is the aspartate 152. Residue arginine 153 participates in substrate binding. The N-linked (GlcNAc...) asparagine; by host glycan is linked to asparagine 202. Position 278–279 (glutamate 278–glutamate 279) interacts with substrate. Arginine 294 provides a ligand contact to substrate. Ca(2+) is bound by residues aspartate 295, glycine 299, and aspartate 326. Position 373 (arginine 373) interacts with substrate. N-linked (GlcNAc...) asparagine; by host glycosylation occurs at asparagine 403. The active-site Nucleophile is the tyrosine 407.

It belongs to the glycosyl hydrolase 34 family. Homotetramer. Requires Ca(2+) as cofactor. N-glycosylated.

The protein resides in the virion membrane. It is found in the host apical cell membrane. The catalysed reaction is Hydrolysis of alpha-(2-&gt;3)-, alpha-(2-&gt;6)-, alpha-(2-&gt;8)- glycosidic linkages of terminal sialic acid residues in oligosaccharides, glycoproteins, glycolipids, colominic acid and synthetic substrates.. With respect to regulation, inhibited by the neuraminidase inhibitors zanamivir (Relenza) and oseltamivir (Tamiflu). These drugs interfere with the release of progeny virus from infected cells and are effective against all influenza strains. Resistance to neuraminidase inhibitors is quite rare. Its function is as follows. Catalyzes the removal of terminal sialic acid residues from viral and cellular glycoconjugates. Cleaves off the terminal sialic acids on the glycosylated HA during virus budding to facilitate virus release. Additionally helps virus spread through the circulation by further removing sialic acids from the cell surface. These cleavages prevent self-aggregation and ensure the efficient spread of the progeny virus from cell to cell. Otherwise, infection would be limited to one round of replication. Described as a receptor-destroying enzyme because it cleaves a terminal sialic acid from the cellular receptors. May facilitate viral invasion of the upper airways by cleaving the sialic acid moieties on the mucin of the airway epithelial cells. Likely to plays a role in the budding process through its association with lipid rafts during intracellular transport. May additionally display a raft-association independent effect on budding. Plays a role in the determination of host range restriction on replication and virulence. Sialidase activity in late endosome/lysosome traffic seems to enhance virus replication. The polypeptide is Neuraminidase (Aves).